The following is a 429-amino-acid chain: MSRSSDLFHKAQTIIPGGVNSPVRAFKGVGGEPVFFKSGKGAYLTDVDDKQYIDYVGSWGPLILGHCHPKVIEAVDNVLHSGMSFGAPTELEIQLAEKIASLMPSIEKIRMVNSGTEATMTAIRLARGFTNKNKFIKFNGCYHGHSDSLLVKAGSGLLTLGIPSTPGIPQSITEHTLTADFNNLEQVAQLFEKYPNDIATVILEPVPGNMGFILPKIEFLKGLRELCDQYNALLIFDEVMTGFRVGLHGAQGLFGIKPDITTLGKIIGGGMPVGALGGKREIMSFLAPEGPVYQAGTLSGNPLAMAAGLATLKEIEKINFFEDLSNATNKLTEALADAAENANIPFFAASLGGMFGFCFTDKNSVENYLDVASSDEVLFKKFFHAMLAQGVYFAPSMYEAGFVSSMHGDLEIQKTYDAAELVLNQLKSA.

Residue Lys265 is modified to N6-(pyridoxal phosphate)lysine.

It belongs to the class-III pyridoxal-phosphate-dependent aminotransferase family. HemL subfamily. In terms of assembly, homodimer. Pyridoxal 5'-phosphate is required as a cofactor.

It is found in the cytoplasm. It catalyses the reaction (S)-4-amino-5-oxopentanoate = 5-aminolevulinate. It functions in the pathway porphyrin-containing compound metabolism; protoporphyrin-IX biosynthesis; 5-aminolevulinate from L-glutamyl-tRNA(Glu): step 2/2. The sequence is that of Glutamate-1-semialdehyde 2,1-aminomutase from Legionella pneumophila (strain Corby).